The chain runs to 828 residues: MTRSPLRRLIFGALRRVLYLWVRSETINQSSLTLKLDRSRPVFYALSSPSLTDLAVVDHECTKAGLPRPVLPVAVGPLQEPAGFFYLTPDPDWLGRQDKRGAPPTLERLVAAISQHAEEDTQIIPVSVFWGQTPASESSPWKLLFADSWAVTGRLRRLLSVLILGRKTRVQFSAPIHLRELVDHNKGHERTVRMAQRVMRVHFRNLKTAVIGPDISHRRNLVKGLVHDPLVRQAISDEAEREKIPYAKAEAKALHYGNEIASDYTYTAIRFLEVVLSWFWNKIYDGVKVNHIEQVQGIAPGHEVIYVPCHRSHIDYLLLSYLLFRNGLTPPHIAAGINLNMPVIGGLLRRGGAFFMRRTFKGNPLYTAVFNEYLHTLFTKGFPVEYFVEGGRSRTGRMLQPRTGMLAITLRSFLRSSRTPIVFVPVYIGYERVLEGRTYLGELRGASKKKESIFDIFKVIGALKQRFGQVYVNFGEPIRLAGFLDEQQPGWREQELGPQFRPTWLNETTTRLGETVARHLNEAAAINPVNLVALALLSTSRLALDERALTRVLDLYLALLRQVPYSPHTTLPEGDGQALIKHVLGMDLLAEQKDAMGRILYLDEANAVLMTYYRNNVLHIFALPGLLASFFLSSSRMSRDLLGQYVRALYPYLQAELFLRWTPEQLDEVIDQWLAALVSQGLLRQENDIYMRPAPSSRQFVLLTLLARTITQTLQRFYMATSLLLNSGQHTLSAEELEELCVMMAQRLSILHGLNAPEFFDKTLFRHFIQTLVREGVLQPDGDGKLGYHDKLAELAEGVAKRVLSAELRLSIRQVALHRDEPQENPET.

Positions 309–314 (CHRSHI) match the HXXXXD motif motif.

Belongs to the GPAT/DAPAT family.

Its subcellular location is the cell inner membrane. The catalysed reaction is sn-glycerol 3-phosphate + an acyl-CoA = a 1-acyl-sn-glycero-3-phosphate + CoA. Its pathway is phospholipid metabolism; CDP-diacylglycerol biosynthesis; CDP-diacylglycerol from sn-glycerol 3-phosphate: step 1/3. This is Glycerol-3-phosphate acyltransferase from Pseudomonas entomophila (strain L48).